Here is a 130-residue protein sequence, read N- to C-terminus: S-protein homolog 32 (130 aa).

An N-terminal signal peptide occupies residues 1-21 (MKYFTIFVFVFSLCMLGHVSG).

This sequence belongs to the plant self-incompatibility (S1) protein family.

It is found in the secreted. This Arabidopsis thaliana (Mouse-ear cress) protein is S-protein homolog 32.